Here is a 428-residue protein sequence, read N- to C-terminus: Enolase (428 aa).

Residue glutamine 165 coordinates (2R)-2-phosphoglycerate. Glutamate 207 (proton donor) is an active-site residue. Mg(2+) contacts are provided by aspartate 244, glutamate 285, and aspartate 312. Residues lysine 337, arginine 366, serine 367, and lysine 388 each contribute to the (2R)-2-phosphoglycerate site. The Proton acceptor role is filled by lysine 337.

Belongs to the enolase family. Component of the RNA degradosome, a multiprotein complex involved in RNA processing and mRNA degradation. Requires Mg(2+) as cofactor.

Its subcellular location is the cytoplasm. It is found in the secreted. It localises to the cell surface. The enzyme catalyses (2R)-2-phosphoglycerate = phosphoenolpyruvate + H2O. It participates in carbohydrate degradation; glycolysis; pyruvate from D-glyceraldehyde 3-phosphate: step 4/5. Catalyzes the reversible conversion of 2-phosphoglycerate (2-PG) into phosphoenolpyruvate (PEP). It is essential for the degradation of carbohydrates via glycolysis. The chain is Enolase from Coxiella burnetii (strain CbuK_Q154) (Coxiella burnetii (strain Q154)).